The following is a 121-amino-acid chain: Small ribosomal subunit protein uS13 (121 aa).

The disordered stretch occupies residues 91–121 (HRRGLPTRGQNTKNNARTRKGPVKTVANKKK). The span at 106–121 (ARTRKGPVKTVANKKK) shows a compositional bias: basic residues.

Belongs to the universal ribosomal protein uS13 family. In terms of assembly, part of the 30S ribosomal subunit. Forms a loose heterodimer with protein S19. Forms two bridges to the 50S subunit in the 70S ribosome.

Located at the top of the head of the 30S subunit, it contacts several helices of the 16S rRNA. In the 70S ribosome it contacts the 23S rRNA (bridge B1a) and protein L5 of the 50S subunit (bridge B1b), connecting the 2 subunits; these bridges are implicated in subunit movement. Contacts the tRNAs in the A and P-sites. In Macrococcus caseolyticus (strain JCSC5402) (Macrococcoides caseolyticum), this protein is Small ribosomal subunit protein uS13.